Reading from the N-terminus, the 533-residue chain is Bifunctional purine biosynthesis protein PurH (533 aa).

Residues 1–148 (MDTPRPIKRA…KNHKDVTIVV (148 aa)) form the MGS-like domain.

This sequence belongs to the PurH family.

The catalysed reaction is (6R)-10-formyltetrahydrofolate + 5-amino-1-(5-phospho-beta-D-ribosyl)imidazole-4-carboxamide = 5-formamido-1-(5-phospho-D-ribosyl)imidazole-4-carboxamide + (6S)-5,6,7,8-tetrahydrofolate. The enzyme catalyses IMP + H2O = 5-formamido-1-(5-phospho-D-ribosyl)imidazole-4-carboxamide. The protein operates within purine metabolism; IMP biosynthesis via de novo pathway; 5-formamido-1-(5-phospho-D-ribosyl)imidazole-4-carboxamide from 5-amino-1-(5-phospho-D-ribosyl)imidazole-4-carboxamide (10-formyl THF route): step 1/1. It participates in purine metabolism; IMP biosynthesis via de novo pathway; IMP from 5-formamido-1-(5-phospho-D-ribosyl)imidazole-4-carboxamide: step 1/1. The chain is Bifunctional purine biosynthesis protein PurH from Colwellia psychrerythraea (strain 34H / ATCC BAA-681) (Vibrio psychroerythus).